Consider the following 490-residue polypeptide: Beta-glucosidase 42 (490 aa).

A beta-D-glucoside is bound by residues Q35, H137, N182–E183, Y317, and E388. E183 acts as the Proton donor in catalysis. The active-site Nucleophile is the E388. N420 is a glycosylation site (N-linked (GlcNAc...) asparagine). A beta-D-glucoside is bound by residues W437, E444–W445, and F453.

It belongs to the glycosyl hydrolase 1 family. As to expression, expressed at low levels predominantly in root epidermal cells.

The enzyme catalyses Hydrolysis of terminal, non-reducing beta-D-glucosyl residues with release of beta-D-glucose.. In terms of biological role, glucosidase that hydrolyzes scopolin and various beta-glucosides, cellooligosaccharides (mainly cellotriose) and laminarioligosaccharides. Can use p-nitrophenyl-beta-glucosides (pNP beta-Glc) and p-nitrophenyl-beta-D-fucosides (pNP beta-D-Fuc) as substrates, and, to a lower extent, beta-galactosides, beta-mannosides and beta-xylosides. Involved in the secretion of root-derived phenolics upon iron ions (Fe) depletion. Promotes disease resistance toward B.cinerea, H.arabidopsidis and P.syringae pv. tomato DC3000. Required during rhizobacteria-mediated (e.g. P.fluorescens WCS417r) broad-spectrum induced systemic resistance (ISR) against several pathogens. The sequence is that of Beta-glucosidase 42 from Arabidopsis thaliana (Mouse-ear cress).